Here is a 1206-residue protein sequence, read N- to C-terminus: DNA polymerase (1206 aa).

It belongs to the DNA polymerase type-B family.

It carries out the reaction DNA(n) + a 2'-deoxyribonucleoside 5'-triphosphate = DNA(n+1) + diphosphate. The polypeptide is DNA polymerase (dpo) (Pyramimonas orientalis virus (PoV01)).